Reading from the N-terminus, the 307-residue chain is MRIVFAGTPDFAVASLRAAAQRHEVVAVYTQPDRPAGRGRGLTPSPVKLDAIARGIPVFQPQTLRSPEALATLRALQPDLMVVVAYGLILPKAVLAAPTHGCWNVHASLLPRWRGAAPIQRAIEAGDTETGVCLMQMEAGLDTGPVLLSQRVEIGEQETGGQLHDRLAALGAQVLSDGLGLLRAGIRPVAQPQPAEGVTYAHKLDKAQARLDWAQPAEELARRVRAFNPWPVAEAILAGERVRLHGAVALDLAHQQAPGTLLAASKQGIDIACGQGALRVRVLQREGGKAITAADYLNARRDLPALR.

Position 108–111 (108–111 (SLLP)) interacts with (6S)-5,6,7,8-tetrahydrofolate.

It belongs to the Fmt family.

It catalyses the reaction L-methionyl-tRNA(fMet) + (6R)-10-formyltetrahydrofolate = N-formyl-L-methionyl-tRNA(fMet) + (6S)-5,6,7,8-tetrahydrofolate + H(+). Its function is as follows. Attaches a formyl group to the free amino group of methionyl-tRNA(fMet). The formyl group appears to play a dual role in the initiator identity of N-formylmethionyl-tRNA by promoting its recognition by IF2 and preventing the misappropriation of this tRNA by the elongation apparatus. The protein is Methionyl-tRNA formyltransferase of Xanthomonas campestris pv. campestris (strain 8004).